A 328-amino-acid chain; its full sequence is L-lactate dehydrogenase (328 aa).

NAD(+) contacts are provided by residues valine 18, glutamate 39, lysine 46, tyrosine 71, and 85-86; that span reads GA. 2 residues coordinate substrate: glutamine 88 and arginine 94. NAD(+)-binding positions include serine 107, 124-126, and serine 149; that span reads AAN. Position 126 to 129 (126 to 129) interacts with substrate; the sequence is NPVD. Position 154-157 (154-157) interacts with substrate; sequence DSAR. Positions 159 and 174 each coordinate beta-D-fructose 1,6-bisphosphate. Catalysis depends on histidine 181, which acts as the Proton acceptor. Phosphotyrosine is present on tyrosine 226. Threonine 235 serves as a coordination point for substrate.

It belongs to the LDH/MDH superfamily. LDH family. As to quaternary structure, homotetramer.

It is found in the cytoplasm. It catalyses the reaction (S)-lactate + NAD(+) = pyruvate + NADH + H(+). The protein operates within fermentation; pyruvate fermentation to lactate; (S)-lactate from pyruvate: step 1/1. Its activity is regulated as follows. Allosterically activated by fructose 1,6-bisphosphate (FBP). Catalyzes the conversion of lactate to pyruvate. This Streptococcus thermophilus (strain ATCC BAA-250 / LMG 18311) protein is L-lactate dehydrogenase.